Reading from the N-terminus, the 59-residue chain is U-actitoxin-Aer2b (59 aa).

Contains 5 disulfide bonds.

It is found in the secreted. The protein resides in the nematocyst. In Anemonia erythraea (Sea anemone), this protein is U-actitoxin-Aer2b.